A 192-amino-acid polypeptide reads, in one-letter code: Putative inactive ribonuclease 11 (192 aa).

An N-terminal signal peptide occupies residues 1–15; that stretch reads MAVFLLLLALGLLLA. Positions 21-54 are disordered; that stretch reads RMKGTTEQFSQEEMQPAAKQTLEESANSTLSDKN. The span at 43-54 shows a compositional bias: polar residues; sequence EESANSTLSDKN. 2 N-linked (GlcNAc...) asparagine glycosylation sites follow: Asn47 and Asn104.

This sequence belongs to the pancreatic ribonuclease family.

The protein resides in the secreted. The sequence is that of Putative inactive ribonuclease 11 (Rnase11) from Mus musculus (Mouse).